The following is a 320-amino-acid chain: Cytochrome f (320 aa).

Positions 1-35 (MQTRNTFFWIKEQMTRSISVSIIVYVITQTSISNA) are cleaved as a signal peptide. Residues Tyr36, Cys56, Cys59, and His60 each coordinate heme. A helical transmembrane segment spans residues 286–306 (VQGLLFFFASVILAQIFLVLK).

Belongs to the cytochrome f family. In terms of assembly, the 4 large subunits of the cytochrome b6-f complex are cytochrome b6, subunit IV (17 kDa polypeptide, petD), cytochrome f and the Rieske protein, while the 4 small subunits are PetG, PetL, PetM and PetN. The complex functions as a dimer. The cofactor is heme.

It localises to the plastid. Its subcellular location is the chloroplast thylakoid membrane. Its function is as follows. Component of the cytochrome b6-f complex, which mediates electron transfer between photosystem II (PSII) and photosystem I (PSI), cyclic electron flow around PSI, and state transitions. The protein is Cytochrome f of Buxus microphylla (Littleleaf boxwood).